We begin with the raw amino-acid sequence, 161 residues long: 2-C-methyl-D-erythritol 2,4-cyclodiphosphate synthase (161 aa).

Positions 11 and 13 each coordinate a divalent metal cation. 4-CDP-2-C-methyl-D-erythritol 2-phosphate is bound by residues 11–13 and 37–38; these read DIH and HS. H45 is a binding site for a divalent metal cation. 4-CDP-2-C-methyl-D-erythritol 2-phosphate-binding positions include 59–61, 135–138, and R145; these read DIG and TTNE.

Belongs to the IspF family. As to quaternary structure, homotrimer. Requires a divalent metal cation as cofactor.

It carries out the reaction 4-CDP-2-C-methyl-D-erythritol 2-phosphate = 2-C-methyl-D-erythritol 2,4-cyclic diphosphate + CMP. Its pathway is isoprenoid biosynthesis; isopentenyl diphosphate biosynthesis via DXP pathway; isopentenyl diphosphate from 1-deoxy-D-xylulose 5-phosphate: step 4/6. Functionally, involved in the biosynthesis of isopentenyl diphosphate (IPP) and dimethylallyl diphosphate (DMAPP), two major building blocks of isoprenoid compounds. Catalyzes the conversion of 4-diphosphocytidyl-2-C-methyl-D-erythritol 2-phosphate (CDP-ME2P) to 2-C-methyl-D-erythritol 2,4-cyclodiphosphate (ME-CPP) with a corresponding release of cytidine 5-monophosphate (CMP). The sequence is that of 2-C-methyl-D-erythritol 2,4-cyclodiphosphate synthase from Thermosynechococcus vestitus (strain NIES-2133 / IAM M-273 / BP-1).